The sequence spans 226 residues: MSDSENEGPPQLSSYALAALQEFYAEQQHHHSDLCGDDKYNIGIIEENWQLSQFWYSPETATCLAEDAVAAAGEGGRIACVSAPSVYQKLRERHRDDVSVCIFEYDRRFAIYGEDFVYYDYKNPVDLPERIATHSFDIVVADPPYLSEECLRKMSETIKLLTRGKILLCTGAVMEDAAAKLLGVKMCKFIPEHTRTLGNEFRCFVNYNSGLDCNLSVQLPVQEGPK.

Ser-2 bears the N-acetylserine mark. Ser-2 bears the Phosphoserine mark.

It belongs to the class I-like SAM-binding methyltransferase superfamily. EFM5 family.

It localises to the cytoplasm. The catalysed reaction is L-lysyl-[protein] + 3 S-adenosyl-L-methionine = N(6),N(6),N(6)-trimethyl-L-lysyl-[protein] + 3 S-adenosyl-L-homocysteine + 3 H(+). Functionally, protein-lysine methyltransferase that selectively catalyzes the trimethylation of EEF1A at 'Lys-79'. The sequence is that of EEF1A lysine methyltransferase 1 from Bos taurus (Bovine).